Here is a 295-residue protein sequence, read N- to C-terminus: Protein SSO2 (295 aa).

Topologically, residues 1 to 269 (MSNANPYENN…ARKARKNKIR (269 aa)) are cytoplasmic. Ser31 and Ser34 each carry phosphoserine. Residues 39 to 100 (AFMNKINSIN…ATDLQYQLKA (62 aa)) are a coiled coil. The 63-residue stretch at 194 to 256 (LAEVQARHQE…EQGVGHTNKA (63 aa)) folds into the t-SNARE coiled-coil homology domain. The chain crosses the membrane as a helical; Anchor for type IV membrane protein span at residues 270–291 (CLIICFIIFAIVVVVVVVPSVV). Topologically, residues 292 to 295 (ETRK) are extracellular.

It belongs to the syntaxin family.

The protein resides in the membrane. Its function is as follows. Required for vesicle fusion with the plasma membrane. This is Protein SSO2 (SSO2) from Saccharomyces cerevisiae (strain ATCC 204508 / S288c) (Baker's yeast).